The primary structure comprises 340 residues: 4-hydroxy-3-methylbut-2-enyl diphosphate reductase (340 aa).

Position 19 (C19) interacts with [4Fe-4S] cluster. Positions 50 and 90 each coordinate (2E)-4-hydroxy-3-methylbut-2-enyl diphosphate. H50 and H90 together coordinate dimethylallyl diphosphate. Positions 50 and 90 each coordinate isopentenyl diphosphate. C112 lines the [4Fe-4S] cluster pocket. (2E)-4-hydroxy-3-methylbut-2-enyl diphosphate is bound at residue H141. H141 provides a ligand contact to dimethylallyl diphosphate. H141 contributes to the isopentenyl diphosphate binding site. Catalysis depends on E143, which acts as the Proton donor. T190 is a binding site for (2E)-4-hydroxy-3-methylbut-2-enyl diphosphate. Position 220 (C220) interacts with [4Fe-4S] cluster. (2E)-4-hydroxy-3-methylbut-2-enyl diphosphate contacts are provided by S248, S249, N250, and S292. Dimethylallyl diphosphate contacts are provided by S248, S249, N250, and S292. Isopentenyl diphosphate is bound by residues S248, S249, N250, and S292.

This sequence belongs to the IspH family. The cofactor is [4Fe-4S] cluster.

It catalyses the reaction isopentenyl diphosphate + 2 oxidized [2Fe-2S]-[ferredoxin] + H2O = (2E)-4-hydroxy-3-methylbut-2-enyl diphosphate + 2 reduced [2Fe-2S]-[ferredoxin] + 2 H(+). It carries out the reaction dimethylallyl diphosphate + 2 oxidized [2Fe-2S]-[ferredoxin] + H2O = (2E)-4-hydroxy-3-methylbut-2-enyl diphosphate + 2 reduced [2Fe-2S]-[ferredoxin] + 2 H(+). The protein operates within isoprenoid biosynthesis; dimethylallyl diphosphate biosynthesis; dimethylallyl diphosphate from (2E)-4-hydroxy-3-methylbutenyl diphosphate: step 1/1. It participates in isoprenoid biosynthesis; isopentenyl diphosphate biosynthesis via DXP pathway; isopentenyl diphosphate from 1-deoxy-D-xylulose 5-phosphate: step 6/6. In terms of biological role, catalyzes the conversion of 1-hydroxy-2-methyl-2-(E)-butenyl 4-diphosphate (HMBPP) into a mixture of isopentenyl diphosphate (IPP) and dimethylallyl diphosphate (DMAPP). Acts in the terminal step of the DOXP/MEP pathway for isoprenoid precursor biosynthesis. The protein is 4-hydroxy-3-methylbut-2-enyl diphosphate reductase of Thermus thermophilus (strain ATCC BAA-163 / DSM 7039 / HB27).